The sequence spans 217 residues: ATP-dependent Clp protease proteolytic subunit 1 (217 aa).

The segment at 1–24 (MTPLTTGWHPALSPRAEEGDTPPS) is disordered. The active-site Nucleophile is the S108. H133 is an active-site residue.

Belongs to the peptidase S14 family. In terms of assembly, fourteen ClpP subunits assemble into 2 heptameric rings which stack back to back to give a disk-like structure with a central cavity, resembling the structure of eukaryotic proteasomes.

Its subcellular location is the cytoplasm. The enzyme catalyses Hydrolysis of proteins to small peptides in the presence of ATP and magnesium. alpha-casein is the usual test substrate. In the absence of ATP, only oligopeptides shorter than five residues are hydrolyzed (such as succinyl-Leu-Tyr-|-NHMec, and Leu-Tyr-Leu-|-Tyr-Trp, in which cleavage of the -Tyr-|-Leu- and -Tyr-|-Trp bonds also occurs).. Functionally, cleaves peptides in various proteins in a process that requires ATP hydrolysis. Has a chymotrypsin-like activity. Plays a major role in the degradation of misfolded proteins. The chain is ATP-dependent Clp protease proteolytic subunit 1 from Streptomyces avermitilis (strain ATCC 31267 / DSM 46492 / JCM 5070 / NBRC 14893 / NCIMB 12804 / NRRL 8165 / MA-4680).